The primary structure comprises 542 residues: Membrane protein insertase YidC (542 aa).

Helical transmembrane passes span 6–26, 326–346, 350–370, 421–441, 458–478, and 501–521; these read NILL…WQTD, LVVD…LLMF, FVGN…GGLY, GGCL…WVLL, LSVQ…MFLM, and VIFT…WLVG.

Belongs to the OXA1/ALB3/YidC family. Type 1 subfamily. Interacts with the Sec translocase complex via SecD. Specifically interacts with transmembrane segments of nascent integral membrane proteins during membrane integration.

The protein localises to the cell inner membrane. Its function is as follows. Required for the insertion and/or proper folding and/or complex formation of integral membrane proteins into the membrane. Involved in integration of membrane proteins that insert both dependently and independently of the Sec translocase complex, as well as at least some lipoproteins. Aids folding of multispanning membrane proteins. In Shewanella frigidimarina (strain NCIMB 400), this protein is Membrane protein insertase YidC.